Reading from the N-terminus, the 429-residue chain is Light-independent protochlorophyllide reductase subunit N (429 aa).

Residues C32, C57, and C118 each coordinate [4Fe-4S] cluster.

It belongs to the BchN/ChlN family. As to quaternary structure, protochlorophyllide reductase is composed of three subunits; BchL, BchN and BchB. Forms a heterotetramer of two BchB and two BchN subunits. It depends on [4Fe-4S] cluster as a cofactor.

The catalysed reaction is chlorophyllide a + oxidized 2[4Fe-4S]-[ferredoxin] + 2 ADP + 2 phosphate = protochlorophyllide a + reduced 2[4Fe-4S]-[ferredoxin] + 2 ATP + 2 H2O. Its pathway is porphyrin-containing compound metabolism; bacteriochlorophyll biosynthesis (light-independent). In terms of biological role, component of the dark-operative protochlorophyllide reductase (DPOR) that uses Mg-ATP and reduced ferredoxin to reduce ring D of protochlorophyllide (Pchlide) to form chlorophyllide a (Chlide). This reaction is light-independent. The NB-protein (BchN-BchB) is the catalytic component of the complex. The chain is Light-independent protochlorophyllide reductase subunit N from Rhodopseudomonas palustris (strain ATCC BAA-98 / CGA009).